A 628-amino-acid chain; its full sequence is MTTTDTASETKPFQAEVAELLNLMVHSVYSETDIFLRELISNASDALDKLRYESIATPALMEAGGAPKIQIVPRKAPDTLTVIDNGIGMNRQELIDNLGTIAKSGTKSFLTKLTEAKDGAGLIGQFGVGFYAAFMVADNIVVTSRRAGSGEVWTWSSSGGAGFEIAPASEEAAARVVRGTEIVLHLKPDAAKYLEAYQIERIVSEYSDNIQFPIELVPEEGEPRQINSASALWQRSKSELTEEDYNQAYKQIAGAFDEPAMTLHYRAEGRQSYAVLLFAPATKPFDLFEPERKGRIKLYVRRVFITADADLLPPYLRFLRGVIDSEDLPLNLSREMLQNNPQLAQIRKAVTGKVIGELESLADKKPEDFARIWEAFGPVLKEGLYEDYERREKLLALARFTTTAGEKRTLSQYVEAMKENQTEIYYLVGDSIERLKSNPKLESATARGIEVLLLTDGVDAFWTSGQLDFGGKPLKSLSQGDVNFDLIPKLDADKPDDKPDETKADEATVIAVIKDALGERVSDVKASQRLTSSASCLVAGGFGPDRELEKMLARANKGAATKPVLEINLGHPLVAALADAKADKADATDLSFLLLEQAQILDGELPEDPAAFAGRLNRLVLRGLVAHG.

The a; substrate-binding stretch occupies residues 1–334; the sequence is MTTTDTASET…SEDLPLNLSR (334 aa). A b region spans residues 335 to 550; that stretch reads EMLQNNPQLA…GFGPDRELEK (216 aa). Positions 551-628 are c; it reads MLARANKGAA…LVLRGLVAHG (78 aa).

Belongs to the heat shock protein 90 family. Homodimer.

It localises to the cytoplasm. Its function is as follows. Molecular chaperone. Has ATPase activity. The polypeptide is Chaperone protein HtpG (Rhodopseudomonas palustris (strain BisB5)).